The primary structure comprises 115 residues: Beta-2-microglobulin (115 aa).

A signal peptide spans 1 to 18 (MGLLICSLLLGLLCCSMA). One can recognise an Ig-like C1-type domain in the interval 23–114 (PKVEVYTREP…KSKDHFLMIG (92 aa)).

It belongs to the beta-2-microglobulin family. In terms of assembly, heterodimer of an alpha chain and a beta chain. Beta-2-microglobulin is the beta-chain of major histocompatibility complex class I molecules.

The protein resides in the secreted. In terms of biological role, component of the class I major histocompatibility complex (MHC). Involved in the presentation of peptide antigens to the immune system. This Paralichthys olivaceus (Bastard halibut) protein is Beta-2-microglobulin (b2m).